The chain runs to 235 residues: Pyridoxine 5'-phosphate synthase (235 aa).

3-amino-2-oxopropyl phosphate is bound at residue asparagine 6. 1-deoxy-D-xylulose 5-phosphate is bound at residue 8 to 9 (DH). Arginine 17 is a 3-amino-2-oxopropyl phosphate binding site. Histidine 42 serves as the catalytic Proton acceptor. 1-deoxy-D-xylulose 5-phosphate-binding residues include arginine 44 and histidine 49. Glutamate 69 functions as the Proton acceptor in the catalytic mechanism. Residue threonine 99 coordinates 1-deoxy-D-xylulose 5-phosphate. Histidine 189 functions as the Proton donor in the catalytic mechanism. 3-amino-2-oxopropyl phosphate contacts are provided by residues glycine 190 and 211 to 212 (GH).

This sequence belongs to the PNP synthase family. Homooctamer; tetramer of dimers.

It is found in the cytoplasm. The enzyme catalyses 3-amino-2-oxopropyl phosphate + 1-deoxy-D-xylulose 5-phosphate = pyridoxine 5'-phosphate + phosphate + 2 H2O + H(+). Its pathway is cofactor biosynthesis; pyridoxine 5'-phosphate biosynthesis; pyridoxine 5'-phosphate from D-erythrose 4-phosphate: step 5/5. Catalyzes the complicated ring closure reaction between the two acyclic compounds 1-deoxy-D-xylulose-5-phosphate (DXP) and 3-amino-2-oxopropyl phosphate (1-amino-acetone-3-phosphate or AAP) to form pyridoxine 5'-phosphate (PNP) and inorganic phosphate. This is Pyridoxine 5'-phosphate synthase from Chlorobium phaeovibrioides (strain DSM 265 / 1930) (Prosthecochloris vibrioformis (strain DSM 265)).